Reading from the N-terminus, the 186-residue chain is Enhancer of split m7 protein (186 aa).

The bHLH domain occupies 13-68 (YRKVMKPLLERKRRARINKCLDELKDLMAECVAQTGDAKFEKADILEVTVQHLRKL). The 34-residue stretch at 83–116 (FRAGYIRAANEVSRALASLPRVDVAFGTTLMTHL) folds into the Orange domain. The WRPW motif motif lies at 183 to 186 (WRPW).

In terms of assembly, transcription repression requires formation of a complex with a corepressor protein (Groucho). Forms homodimers.

It is found in the nucleus. In terms of biological role, participates in the control of cell fate choice by uncommitted neuroectodermal cells in the embryo. Transcriptional repressor. Binds DNA on N-box motifs: 5'-CACNAG-3'. This chain is Enhancer of split m7 protein, found in Drosophila melanogaster (Fruit fly).